The primary structure comprises 669 residues: DNA ligase (669 aa).

NAD(+) is bound by residues 33–37 (DVTYD), 82–83 (SL), and Glu-115. The N6-AMP-lysine intermediate role is filled by Lys-117. Residues Arg-138, Glu-172, Lys-286, and Lys-310 each contribute to the NAD(+) site. Zn(2+) contacts are provided by Cys-401, Cys-404, Cys-417, and Cys-422. Residues 589–669 (VDSSFLFGKK…DIKNLVNLDD (81 aa)) form the BRCT domain.

This sequence belongs to the NAD-dependent DNA ligase family. LigA subfamily. Mg(2+) serves as cofactor. Mn(2+) is required as a cofactor.

It carries out the reaction NAD(+) + (deoxyribonucleotide)n-3'-hydroxyl + 5'-phospho-(deoxyribonucleotide)m = (deoxyribonucleotide)n+m + AMP + beta-nicotinamide D-nucleotide.. In terms of biological role, DNA ligase that catalyzes the formation of phosphodiester linkages between 5'-phosphoryl and 3'-hydroxyl groups in double-stranded DNA using NAD as a coenzyme and as the energy source for the reaction. It is essential for DNA replication and repair of damaged DNA. This Borrelia duttonii (strain Ly) protein is DNA ligase.